The following is a 516-amino-acid chain: (R)-citramalate synthase CimA (516 aa).

Residues 8 to 269 enclose the Pyruvate carboxyltransferase domain; sequence LEILDVTLRD…KTNINEIAIT (262 aa). Arg-16 (proton donor) is an active-site residue. Residues 16–17 and Tyr-144 contribute to the pyruvate site; that span reads RD. A Mn(2+)-binding site is contributed by Asp-17. The active-site Proton acceptor is Glu-146. Thr-179 is a binding site for pyruvate. Residues His-207 and His-209 each coordinate Mn(2+).

The protein belongs to the alpha-IPM synthase/homocitrate synthase family. As to quaternary structure, homodimer. It depends on Mn(2+) as a cofactor.

It catalyses the reaction pyruvate + acetyl-CoA + H2O = (3R)-citramalate + CoA + H(+). Its pathway is amino-acid biosynthesis; L-isoleucine biosynthesis; 2-oxobutanoate from pyruvate: step 1/3. Its activity is regulated as follows. Regulated by the end-product isoleucine via a feedback inhibition. The binding of isoleucine has inhibitory effects on the binding of both pyruvate and acetyl-CoA. May act via conformational change of the dimer interface of the regulatory domain, leading to inhibition of the catalytic reaction. In terms of biological role, catalyzes the condensation of pyruvate and acetyl-coenzyme A to form (R)-citramalate. Shows strict substrate specificity for pyruvate. Cannot use alpha-ketoisovalerate, alpha-ketobutyrate, alpha-ketoisocaproate, alpha-ketoglutarate or glyoxylate. This Leptospira interrogans serogroup Icterohaemorrhagiae serovar Lai (strain 56601) protein is (R)-citramalate synthase CimA.